A 146-amino-acid polypeptide reads, in one-letter code: Hemoglobin subunit beta (146 aa).

Residues 2 to 146 (QWTAEEKQLI…VAHALARKYH (145 aa)) enclose the Globin domain. Heme b-binding residues include H63 and H92.

It belongs to the globin family. As to quaternary structure, heterotetramer of two alpha chains and two beta chains. Red blood cells.

In terms of biological role, involved in oxygen transport from the lung to the various peripheral tissues. This Passer montanus (Eurasian tree sparrow) protein is Hemoglobin subunit beta (HBB).